The chain runs to 340 residues: Ketol-acid reductoisomerase (NADP(+)) (340 aa).

Residues 3 to 182 (VQMEYEKDVK…GAARVGLLET (180 aa)) enclose the KARI N-terminal Rossmann domain. Residues 26 to 29 (YGSQ), Arg49, Ser53, and 83 to 86 (DEIQ) each bind NADP(+). The active site involves His108. Residue Gly134 coordinates NADP(+). The KARI C-terminal knotted domain maps to 183-328 (TYKEETEEDL…AELRKAMPFV (146 aa)). Residues Asp191, Glu195, Glu227, and Glu231 each contribute to the Mg(2+) site. Residue Ser252 participates in substrate binding.

Belongs to the ketol-acid reductoisomerase family. Mg(2+) serves as cofactor.

The catalysed reaction is (2R)-2,3-dihydroxy-3-methylbutanoate + NADP(+) = (2S)-2-acetolactate + NADPH + H(+). It catalyses the reaction (2R,3R)-2,3-dihydroxy-3-methylpentanoate + NADP(+) = (S)-2-ethyl-2-hydroxy-3-oxobutanoate + NADPH + H(+). It functions in the pathway amino-acid biosynthesis; L-isoleucine biosynthesis; L-isoleucine from 2-oxobutanoate: step 2/4. The protein operates within amino-acid biosynthesis; L-valine biosynthesis; L-valine from pyruvate: step 2/4. Functionally, involved in the biosynthesis of branched-chain amino acids (BCAA). Catalyzes an alkyl-migration followed by a ketol-acid reduction of (S)-2-acetolactate (S2AL) to yield (R)-2,3-dihydroxy-isovalerate. In the isomerase reaction, S2AL is rearranged via a Mg-dependent methyl migration to produce 3-hydroxy-3-methyl-2-ketobutyrate (HMKB). In the reductase reaction, this 2-ketoacid undergoes a metal-dependent reduction by NADPH to yield (R)-2,3-dihydroxy-isovalerate. This chain is Ketol-acid reductoisomerase (NADP(+)), found in Streptococcus thermophilus (strain ATCC BAA-491 / LMD-9).